Reading from the N-terminus, the 519-residue chain is cAMP-dependent protein kinase catalytic subunit (519 aa).

The segment at 1-195 (MLPDTGILSP…SQTLQKAENA (195 aa)) is disordered. Composition is skewed to polar residues over residues 10–25 (PFTTAVNPDPPQSQTL), 116–159 (VTPS…TSPI), and 173–191 (TPVNESAGHSRSDSQTLQK). The region spanning 208 to 463 (FNFQRTLGTG…SRSVLEHPWF (256 aa)) is the Protein kinase domain. Residues 214-222 (LGTGSFGRV) and K237 contribute to the ATP site. The Proton acceptor role is filled by D331. Residues 464 to 519 (AEVNWERLLSKQIEPPYVPPVRGGIGDASLFDKYPEETEEYGKDGPDQYGHFFTDF) form the AGC-kinase C-terminal domain.

Belongs to the protein kinase superfamily. Ser/Thr protein kinase family.

It catalyses the reaction L-seryl-[protein] + ATP = O-phospho-L-seryl-[protein] + ADP + H(+). The catalysed reaction is L-threonyl-[protein] + ATP = O-phospho-L-threonyl-[protein] + ADP + H(+). Activated by cAMP. Functions downstream of adenylate cyclase to regulate trap-development for nematode capture. The chain is cAMP-dependent protein kinase catalytic subunit from Arthrobotrys oligospora (strain ATCC 24927 / CBS 115.81 / DSM 1491) (Nematode-trapping fungus).